Here is a 157-residue protein sequence, read N- to C-terminus: 3-dehydroquinate dehydratase (157 aa).

Tyrosine 24 serves as the catalytic Proton acceptor. Residues asparagine 75, histidine 81, and aspartate 88 each contribute to the substrate site. Histidine 101 (proton donor) is an active-site residue. Residues 102–103 (LS) and arginine 112 each bind substrate.

It belongs to the type-II 3-dehydroquinase family. In terms of assembly, homododecamer.

It catalyses the reaction 3-dehydroquinate = 3-dehydroshikimate + H2O. It participates in metabolic intermediate biosynthesis; chorismate biosynthesis; chorismate from D-erythrose 4-phosphate and phosphoenolpyruvate: step 3/7. Catalyzes a trans-dehydration via an enolate intermediate. The protein is 3-dehydroquinate dehydratase of Brucella abortus (strain S19).